The chain runs to 401 residues: Anhydro-N-acetylmuramic acid kinase (401 aa).

Position 25 to 32 (25 to 32 (GTSLDGLD)) interacts with ATP.

This sequence belongs to the anhydro-N-acetylmuramic acid kinase family.

It catalyses the reaction 1,6-anhydro-N-acetyl-beta-muramate + ATP + H2O = N-acetyl-D-muramate 6-phosphate + ADP + H(+). It participates in amino-sugar metabolism; 1,6-anhydro-N-acetylmuramate degradation. The protein operates within cell wall biogenesis; peptidoglycan recycling. Its function is as follows. Catalyzes the specific phosphorylation of 1,6-anhydro-N-acetylmuramic acid (anhMurNAc) with the simultaneous cleavage of the 1,6-anhydro ring, generating MurNAc-6-P. Is required for the utilization of anhMurNAc either imported from the medium or derived from its own cell wall murein, and thus plays a role in cell wall recycling. In Pseudoalteromonas atlantica (strain T6c / ATCC BAA-1087), this protein is Anhydro-N-acetylmuramic acid kinase.